The chain runs to 113 residues: UPF0122 protein MCAP_0480 (113 aa).

It belongs to the UPF0122 family.

Its function is as follows. Might take part in the signal recognition particle (SRP) pathway. This is inferred from the conservation of its genetic proximity to ftsY/ffh. May be a regulatory protein. In Mycoplasma capricolum subsp. capricolum (strain California kid / ATCC 27343 / NCTC 10154), this protein is UPF0122 protein MCAP_0480.